We begin with the raw amino-acid sequence, 146 residues long: NADH-ubiquinone oxidoreductase chain 6 (146 aa).

Helical transmembrane passes span 10–30 (LTAIGMLTPVQSMTCLMILFV), 41–61 (FVLMGMLYVTMYVGAMAMLFL), 75–95 (GTITPLMVTLLAMCLMPLDIT), and 124–144 (AMLLMLTGMMLMLSVMGAMSI).

The protein belongs to the complex I subunit 6 family.

Its subcellular location is the mitochondrion membrane. It catalyses the reaction a ubiquinone + NADH + 5 H(+)(in) = a ubiquinol + NAD(+) + 4 H(+)(out). Core subunit of the mitochondrial membrane respiratory chain NADH dehydrogenase (Complex I) that is believed to belong to the minimal assembly required for catalysis. Complex I functions in the transfer of electrons from NADH to the respiratory chain. The immediate electron acceptor for the enzyme is believed to be ubiquinone. The chain is NADH-ubiquinone oxidoreductase chain 6 (ND6) from Debaryomyces hansenii (strain ATCC 36239 / CBS 767 / BCRC 21394 / JCM 1990 / NBRC 0083 / IGC 2968) (Yeast).